A 714-amino-acid chain; its full sequence is MLHLKVQFLDDSQKIFVVDQKSSGKALFNLSCSHLNLAEKEYFGLEFCSHSGNNVWLELLKPITKQVKNPKEIVFKFMVKFFPVDPGHLREELTRYLFTLQIKKDLALGRLPCSDNCTALMVSHILQSELGDFHEETDRKHLAQTRYLPNQDCLEGKIMHFHQKHIGRSPAESDILLLDIARKLDMYGIRPHPASDGEGMQIHLAVAHMGVLVLRGNTKINTFNWAKIRKLSFKRKHFLIKLHANILVLCKDTLEFTMASRDACKAFWKTCVEYHAFFRLSEEPKSKPKTLLCSKGSSFRYSGRTQRQLLEYGRKGRLKSLPFERKHYPSQYHERQCRSSPDLLSDVSKQVEDLRLAYGGGYYQNVNGVHASEPVLESRRRNSALEVTFATELEHSKPEADPTLLHQSQSSSSFPFIYMDPVFNTEPNPNPDPRDIFSERSSLSSFQTSCKFSGNHMSIYSGLTSKVRPAKQLTYTDVPYIPCTGQQVGIMPPQVFFYVDKPPQVPRWSPIRAEERTSPHSYVEPTAMKPAERSPRNIRMKSFQQDLQVLQEAIARTSGRSNINVGLEEEDPNLEDAFVCNIQEQTPKRSQSQSDMKTIRFPFGSEFRPLGPCPALSHKADLFTDMFAEQELPAVLMDQSTAERYVASESSDSESEILKPDYYALYGKEIRSPMARIRLSSGSLQLDEEDEDAYFNTPTAEDRTSLKPCNYFLA.

Residues 2–282 enclose the FERM domain; it reads LHLKVQFLDD…EYHAFFRLSE (281 aa). Positions 537 to 558 form a coiled coil; that stretch reads NIRMKSFQQDLQVLQEAIARTS.

In terms of tissue distribution, expressed in liver, kidney, pancreas and at low levels in brain and heart. Expressed in embryonic brain and developing neural retina.

The protein localises to the cell projection. It is found in the neuron projection. Its subcellular location is the growth cone. Plays a role in neurite development, may be through the activation of the GTPase RAC1. Plays a role in the control of eye movement and gaze stability. In Homo sapiens (Human), this protein is FERM domain-containing protein 7 (FRMD7).